The primary structure comprises 288 residues: ATP synthase gamma chain (288 aa).

This sequence belongs to the ATPase gamma chain family. F-type ATPases have 2 components, CF(1) - the catalytic core - and CF(0) - the membrane proton channel. CF(1) has five subunits: alpha(3), beta(3), gamma(1), delta(1), epsilon(1). CF(0) has three main subunits: a, b and c.

It is found in the cell membrane. Produces ATP from ADP in the presence of a proton gradient across the membrane. The gamma chain is believed to be important in regulating ATPase activity and the flow of protons through the CF(0) complex. The chain is ATP synthase gamma chain from Staphylococcus aureus (strain bovine RF122 / ET3-1).